Consider the following 139-residue polypeptide: Growth factor (139 aa).

An N-terminal signal peptide occupies residues 1–19 (MSMKYLMLLFATMIIRSFA). The N-linked (GlcNAc...) asparagine; by host glycan is linked to asparagine 34. One can recognise an EGF-like domain in the interval 41–81 (AIRLCGPEGDGYCLHGDCIHARDINGMYCRCSHGYTGIRCQ). 3 disulfides stabilise this stretch: cysteine 45–cysteine 58, cysteine 53–cysteine 69, and cysteine 71–cysteine 80. Asparagine 95 carries N-linked (GlcNAc...) asparagine; by host glycosylation.

Belongs to the orthopoxvirus OPG019 family.

It localises to the secreted. In terms of biological role, stimulates cellular proliferation (hyperplasia)and mobility around infected cells to promote rapid and efficient spread of infection. The chain is Growth factor (OPG019) from Camelus.